We begin with the raw amino-acid sequence, 82 residues long: MSKGHSLQDPYLNTLRKERVPVSIYLVNGIKLQGQIESFDQFVILLKNTVSQMVYKTAISTVVPSRPVRLPSGDQPAEPGNA.

The Sm domain maps to 9–68 (DPYLNTLRKERVPVSIYLVNGIKLQGQIESFDQFVILLKNTVSQMVYKTAISTVVPSRPV).

The protein belongs to the Hfq family. As to quaternary structure, homohexamer.

In terms of biological role, RNA chaperone that binds small regulatory RNA (sRNAs) and mRNAs to facilitate mRNA translational regulation in response to envelope stress, environmental stress and changes in metabolite concentrations. Also binds with high specificity to tRNAs. The sequence is that of RNA-binding protein Hfq from Pseudomonas aeruginosa.